The following is a 117-amino-acid chain: Large ribosomal subunit protein bL19 (117 aa).

The protein belongs to the bacterial ribosomal protein bL19 family.

Its function is as follows. This protein is located at the 30S-50S ribosomal subunit interface and may play a role in the structure and function of the aminoacyl-tRNA binding site. In Thermotoga neapolitana (strain ATCC 49049 / DSM 4359 / NBRC 107923 / NS-E), this protein is Large ribosomal subunit protein bL19.